An 874-amino-acid polypeptide reads, in one-letter code: Ectonucleotide pyrophosphatase/phosphodiesterase family member 3 (874 aa).

Topologically, residues 1–11 are cytoplasmic; sequence MDSRLALATEE. Residues 12-30 traverse the membrane as a helical; Signal-anchor for type II membrane protein segment; it reads PIKKDSLKKYKILCVVLLA. The Extracellular portion of the chain corresponds to 31–874; the sequence is LLVIVSLGLG…TYLPTFETII (844 aa). SMB domains are found at residues 51–93 and 94–138; these read QGSC…VKST and QIWT…GESP. 13 disulfides stabilise this stretch: Cys54/Cys58, Cys54/Cys71, Cys58/Cys89, Cys69/Cys71, Cys69/Cys82, Cys75/Cys81, Cys82/Cys89, Cys98/Cys115, Cys103/Cys133, Cys113/Cys126, Cys119/Cys125, Cys144/Cys190, and Cys152/Cys364. A Cell attachment site motif is present at residues 78–80; the sequence is RGD. Residues 160–544 are phosphodiesterase; it reads PVILFSMDGF…HGSLNHLLKT (385 aa). Asp167 provides a ligand contact to Zn(2+). Position 204 (Lys204) interacts with ATP. Thr205 contributes to the Zn(2+) binding site. Thr205 (nucleophile) is an active-site residue. Asn226 provides a ligand contact to ATP. The N-linked (GlcNAc...) asparagine glycan is linked to Asn236. Residue Asp275 coordinates ATP. N-linked (GlcNAc...) asparagine glycans are attached at residues Asn279 and Asn288. Position 289 (Tyr289) interacts with ATP. Asp325, His329, Asp372, and His373 together coordinate Zn(2+). Cystine bridges form between Cys380–Cys477, Cys428–Cys817, Cys561–Cys623, Cys574–Cys679, Cys576–Cys664, and Cys786–Cys796. Asn425 carries N-linked (GlcNAc...) asparagine glycosylation. His482 lines the Zn(2+) pocket. N-linked (GlcNAc...) asparagine glycosylation is found at Asn532, Asn594, Asn687, and Asn701. Residues 581-874 are nuclease; it reads NTPGLEEQAN…TYLPTFETII (294 aa). Ca(2+) contacts are provided by Asp751, Asn753, Asp755, His757, and Asp759. The N-linked (GlcNAc...) asparagine glycan is linked to Asn820.

As to quaternary structure, monomer and homodimer. The cofactor is Zn(2+). Post-translationally, N-glycosylated. N-glycosylation is necessary for normal transport to the cell membrane, but is not the apical targeting signal. In terms of tissue distribution, detected at the tip of villi in the small intestine. Detected on basophils and mast cells (at protein level). Detected in the epithelial layer of the small intestine; expression is higher in the proximal part and lower in the distal part of the small intestine.

It localises to the cell membrane. The protein resides in the apical cell membrane. Its subcellular location is the secreted. The enzyme catalyses a ribonucleoside 5'-triphosphate + H2O = a ribonucleoside 5'-phosphate + diphosphate + H(+). It catalyses the reaction UDP-N-acetyl-alpha-D-glucosamine + H2O = N-acetyl-alpha-D-glucosamine 1-phosphate + UMP + 2 H(+). It carries out the reaction ATP + H2O = AMP + diphosphate + H(+). The catalysed reaction is CTP + H2O = CMP + diphosphate + H(+). The enzyme catalyses GTP + H2O = GMP + diphosphate + H(+). It catalyses the reaction UTP + H2O = UMP + diphosphate + H(+). It carries out the reaction Hydrolytically removes 5'-nucleotides successively from the 3'-hydroxy termini of 3'-hydroxy-terminated oligonucleotides.. The catalysed reaction is P(1),P(3)-bis(5'-adenosyl) triphosphate + H2O = AMP + ADP + 2 H(+). The enzyme catalyses P(1),P(4)-bis(5'-adenosyl) tetraphosphate + H2O = AMP + ATP + 2 H(+). It catalyses the reaction P(1),P(5)-bis(5'-adenosyl) pentaphosphate + H2O = adenosine 5'-tetraphosphate + AMP + 2 H(+). It carries out the reaction P(1),P(4)-bis(5'-guanosyl) tetraphosphate + H2O = GMP + GTP + 2 H(+). Functionally, hydrolase that metabolizes extracellular nucleotides, including ATP, GTP, UTP and CTP. Limits mast cells and basophils response during inflammation and during the chronic phases of allergic responses by eliminating extracellular ATP, a signaling molecule activating these cells in an autocrine manner. Metabolizes extracellular ATP in the lumen of the small intestine, and thereby prevents ATP-induced apoptosis of intestinal plasmacytoid dendritic cells. Has a broad specificity and can also hydrolyze UDP-GlcNAc into UMP and GlcNAc-1-phosphate and potentially several other intracellular nucleotide sugars, including UDP-GalNAc, CMP-NeuAc, GDP-Fuc, and UDP-GlcA. Thereby, could modulate glycan biosynthesis and protein glycosylation. Can hydrolyze extracellular dinucleoside polyphosphates, including the vasoactive adenosine polyphosphates as well. In addition, displays an alkaline phosphodiesterase activity in vitro. This chain is Ectonucleotide pyrophosphatase/phosphodiesterase family member 3, found in Mus musculus (Mouse).